The sequence spans 550 residues: Membrane protein insertase YidC (550 aa).

Residues 6–26 (NLLVIALLFVSFMIWQTWEQD) form a helical membrane-spanning segment. 2 disordered regions span residues 28 to 54 (APKP…GVPA) and 111 to 132 (QSGL…RPLY). The segment covering 30–52 (KPQVQQTTQTTTTAAGSAASQGV) has biased composition (low complexity). Residues 111–127 (QSGLTGRNGPDNPNNNK) show a composition bias toward polar residues. 4 helical membrane-spanning segments follow: residues 346–366 (KWIH…TFIV), 421–441 (LGGC…YYML), 459–479 (LSAQ…MFFI), and 500–520 (PVIF…YYIV).

The protein belongs to the OXA1/ALB3/YidC family. Type 1 subfamily. In terms of assembly, interacts with the Sec translocase complex via SecD. Specifically interacts with transmembrane segments of nascent integral membrane proteins during membrane integration.

The protein localises to the cell inner membrane. Its function is as follows. Required for the insertion and/or proper folding and/or complex formation of integral membrane proteins into the membrane. Involved in integration of membrane proteins that insert both dependently and independently of the Sec translocase complex, as well as at least some lipoproteins. Aids folding of multispanning membrane proteins. The protein is Membrane protein insertase YidC of Cronobacter sakazakii (strain ATCC BAA-894) (Enterobacter sakazakii).